The primary structure comprises 338 residues: MIDKIIILYFYGDMRMNRKRTPRVDTLEAVANVLRAYRELFEGNLIKALYYVDKALELEPDFYLALFLKGLALSAKGEIKEAITTFEELLSYESKNPITWVFVGQLYGMSGNCDEALKCYNKALGIENRFLSAFLLKTICLEFLGEYDELLKCYNEVLTYTPNFVPMWVKKAEILRKLGRYEDALLCLNRALELKPHDKNALYLKGVLLKRMGKFREALECFKKLIDELNVKWIDAIRHAVSLMLALDDLKDAERYINIGLEIRKDDVALWYFKGELYERLGKLDEALKCYEKVIELQPHYIKALLSKARIYERQGNIEAAIEYYNKAVENIHKDHGE.

8 TPR repeats span residues 27–62, 63–96, 97–130, 131–164, 165–198, 199–232, 268–301, and 302–335; these read LEAV…EPDF, YLAL…ESKN, PITW…ENRF, LSAF…TPNF, VPMW…KPHD, KNAL…LNVK, VALW…QPHY, and IKAL…IHKD.

In Methanocaldococcus jannaschii (strain ATCC 43067 / DSM 2661 / JAL-1 / JCM 10045 / NBRC 100440) (Methanococcus jannaschii), this protein is TPR repeat-containing protein MJ0941.